The sequence spans 1146 residues: Ankyrin repeat domain-containing protein 24 (1146 aa).

5 ANK repeats span residues 81–110 (EGKS…NVMS), 114–143 (AGYN…VVDV), 147–176 (SGWT…HLNP), 180–209 (SGAT…AAND), and 213–242 (QGRT…QPGI). Disordered stretches follow at residues 272 to 320 (RPSP…PDDR), 607 to 627 (REME…GAQA), and 766 to 785 (ERVR…GDTT). Polar residues predominate over residues 286-297 (EASSQNSMSSHG). Residues 320-517 (RDAYEEIVRL…QALRQQETRE (198 aa)) are a coiled coil. A coiled-coil region spans residues 714–1110 (AAEASEKLQV…AARDHSSVVA (397 aa)).

As to quaternary structure, homodimer. Interacts (via C-terminal domain) with TRIOBP (via C-terminal domain) isoform 4; recruits TRIOBP isoform 4 to stereocilia rootlets.

It localises to the cell membrane. The protein resides in the cell projection. The protein localises to the stereocilium. In terms of biological role, component of the stereocilia rootlet in hair cells of inner ear. Bridges the apical plasma membrane with the lower rootlet and maintains normal distribution of TRIOBP, thereby reinforcing stereocilia insertion points and organizing rootlets for hearing with long-term resilience. This is Ankyrin repeat domain-containing protein 24 from Homo sapiens (Human).